The chain runs to 380 residues: L-lactate dehydrogenase (380 aa).

Positions 1–380 (MIISSPNDYR…TRDSLVGLPR (380 aa)) constitute an FMN hydroxy acid dehydrogenase domain. Tyrosine 24 is a binding site for substrate. 2 residues coordinate FMN: serine 106 and glutamine 127. Position 129 (tyrosine 129) interacts with substrate. Threonine 155 is an FMN binding site. Arginine 164 is a substrate binding site. Lysine 251 provides a ligand contact to FMN. Residue histidine 275 is the Proton acceptor of the active site. Residue arginine 278 coordinates substrate. 306 to 330 (DSGIRTGLDVVRMLALGAKGVLLGR) provides a ligand contact to FMN.

The protein belongs to the FMN-dependent alpha-hydroxy acid dehydrogenase family. FMN serves as cofactor.

The protein resides in the cell inner membrane. The catalysed reaction is (S)-lactate + A = pyruvate + AH2. In terms of biological role, catalyzes the conversion of L-lactate to pyruvate. Is coupled to the respiratory chain. The sequence is that of L-lactate dehydrogenase from Azorhizobium caulinodans (strain ATCC 43989 / DSM 5975 / JCM 20966 / LMG 6465 / NBRC 14845 / NCIMB 13405 / ORS 571).